The primary structure comprises 178 residues: dCTP deaminase, dUMP-forming (178 aa).

DCTP-binding positions include 96–101 (RSSLGR), Asp113, 121–123 (TLE), Gln142, Tyr156, and Gln163. Residue Glu123 is the Proton donor/acceptor of the active site.

It belongs to the dCTP deaminase family. Homotrimer.

The enzyme catalyses dCTP + 2 H2O = dUMP + NH4(+) + diphosphate. It participates in pyrimidine metabolism; dUMP biosynthesis; dUMP from dCTP: step 1/1. Its function is as follows. Bifunctional enzyme that catalyzes both the deamination of dCTP to dUTP and the hydrolysis of dUTP to dUMP without releasing the toxic dUTP intermediate. The sequence is that of dCTP deaminase, dUMP-forming from Acetivibrio thermocellus (strain ATCC 27405 / DSM 1237 / JCM 9322 / NBRC 103400 / NCIMB 10682 / NRRL B-4536 / VPI 7372) (Clostridium thermocellum).